The chain runs to 398 residues: uncharacterized protein (398 aa).

It belongs to the glycosyltransferase 2 family.

This is an uncharacterized protein from Escherichia coli (strain K12).